We begin with the raw amino-acid sequence, 173 residues long: Glutamyl-tRNA(Gln) amidotransferase subunit F, mitochondrial (173 aa).

The N-terminal 15 residues, 1–15, are a transit peptide targeting the mitochondrion; the sequence is MSRFMIRAVFFRRYT.

Belongs to the GatF family. In terms of assembly, subunit of the heterotrimeric GatFAB amidotransferase (AdT) complex, composed of A, B and F subunits.

The protein localises to the mitochondrion inner membrane. It carries out the reaction L-glutamyl-tRNA(Gln) + L-glutamine + ATP + H2O = L-glutaminyl-tRNA(Gln) + L-glutamate + ADP + phosphate + H(+). Its function is as follows. Allows the formation of correctly charged Gln-tRNA(Gln) through the transamidation of misacylated Glu-tRNA(Gln) in the mitochondria. The reaction takes place in the presence of glutamine and ATP through an activated gamma-phospho-Glu-tRNA(Gln). Required for proper protein synthesis within the mitochondrion. The sequence is that of Glutamyl-tRNA(Gln) amidotransferase subunit F, mitochondrial from Candida glabrata (strain ATCC 2001 / BCRC 20586 / JCM 3761 / NBRC 0622 / NRRL Y-65 / CBS 138) (Yeast).